The chain runs to 1050 residues: MARLLTKSSQVFDFLADRLSVRKSRRFWETQENLESSTPLLQEPQQSYRSNSFNELPPLSRSVTFAENEQPNEAVKLGTFEGCFIPTTLNVLSILLYLRFPWIIGEAGVLKTLLMLFISYAVGIFTSLSISAICTNGMVRGGGAYYAVSRSIGPELGGSIGLIFYVGQILNTGMNISGFVEPIISIFGKESGTISQFLPEGYWWVFLYTTCVLAMCCILCCLGSAIFAKASNALFVVIILSTISIPISSIFVHPFKDPSLLVHFTGLKWSTLMKNLASAYTENEKGTGYESFKSTFGVFFPATAGLLAGASMSGDLKAPSRSIPKGTISSQATTFLLYLLVILCVGASVTRTGLLLDMDVMEHISLHPLFIISGILSSGAFSSFMGIFGAAKLLQAIARDDLIPGMFFFAKGSSYDDIPYVAIGVTYLITQISLFWDINMLSSMITMTFLLTFGFINLSCFLLRISSTPNFRPTFRYFNRRTTLVGTILSFGVMFYVDRLNAFISFLIAGILVVVIYFTCPPKNWGDVSQGIIYHQLRKYLLQTNKARENIKFWRPQILLLINNPNRSENVIRFCNSLKKGSLYILGHVIVSDDFQASMDDLRKQQRLWHQFVLDRGIKAFVELTIAPDEVWGIRGLISSAGLGGIRPNIAVLTFINTNYRRHRIYSGSSFSLENTSEESESDSKKEFVEHDILPVKWVQILEDMLVGSVDVMVTNGFDRLNWPKRKGEKQYIDMFPIHRISGVGSEVNESTPTFATNFETYTMVFQLSWILHTASDWKQGCRLRLITLVEFENEIEAERESMHQMLETFRIKADVVVLCLAAMNLDAYRYIVKNEHVRPSKSSELENLLKDDSWWQEEKKRRGNTVDSLGPIRFPRRMSGYNFRSASFDKSAPPLSVPLSFRLGPHMHSVKSFETESSFGNRSLSPKQENRRTYSDSTIESSLMPNVVREDSSSDRLAPKKKIGRDYSKEKLTFNDLSSRSQYIIMNEIVLKHTKNTSVLFTVLPAPLADTHKSFRKSEEYVDDLLIFMEGLPPCALIHSKSLTITTAL.

Residues 1–83 are Cytoplasmic-facing; that stretch reads MARLLTKSSQ…AVKLGTFEGC (83 aa). Residues serine 9 and serine 60 each carry the phosphoserine modification. Threonine 64 bears the Phosphothreonine mark. Residues 84–104 form a helical membrane-spanning segment; sequence FIPTTLNVLSILLYLRFPWII. The Extracellular portion of the chain corresponds to 105–112; it reads GEAGVLKT. Residues 113–133 traverse the membrane as a helical segment; it reads LLMLFISYAVGIFTSLSISAI. Topologically, residues 134-146 are cytoplasmic; sequence CTNGMVRGGGAYY. Residues 147–169 form a helical membrane-spanning segment; sequence AVSRSIGPELGGSIGLIFYVGQI. The Extracellular segment spans residues 170 to 202; it reads LNTGMNISGFVEPIISIFGKESGTISQFLPEGY. Asparagine 175 is a glycosylation site (N-linked (GlcNAc...) asparagine). The chain crosses the membrane as a helical span at residues 203–223; that stretch reads WWVFLYTTCVLAMCCILCCLG. At 224-232 the chain is on the cytoplasmic side; the sequence is SAIFAKASN. Residues 233 to 253 form a helical membrane-spanning segment; it reads ALFVVIILSTISIPISSIFVH. At 254-295 the chain is on the extracellular side; that stretch reads PFKDPSLLVHFTGLKWSTLMKNLASAYTENEKGTGYESFKST. The residue at position 270 (serine 270) is a Phosphoserine. At threonine 271 the chain carries Phosphothreonine. A helical membrane pass occupies residues 296–316; that stretch reads FGVFFPATAGLLAGASMSGDL. At 317–334 the chain is on the cytoplasmic side; that stretch reads KAPSRSIPKGTISSQATT. The helical transmembrane segment at 335-355 threads the bilayer; it reads FLLYLLVILCVGASVTRTGLL. The Extracellular portion of the chain corresponds to 356 to 368; the sequence is LDMDVMEHISLHP. The chain crosses the membrane as a helical span at residues 369-389; it reads LFIISGILSSGAFSSFMGIFG. Residues 390-417 lie on the Cytoplasmic side of the membrane; it reads AAKLLQAIARDDLIPGMFFFAKGSSYDD. A helical membrane pass occupies residues 418–438; the sequence is IPYVAIGVTYLITQISLFWDI. At 439 to 442 the chain is on the extracellular side; the sequence is NMLS. Residues 443 to 463 traverse the membrane as a helical segment; sequence SMITMTFLLTFGFINLSCFLL. Over 464-480 the chain is Cytoplasmic; sequence RISSTPNFRPTFRYFNR. The chain crosses the membrane as a helical span at residues 481–497; it reads RTTLVGTILSFGVMFYV. Topologically, residues 498 to 499 are extracellular; sequence DR. The helical transmembrane segment at 500-520 threads the bilayer; it reads LNAFISFLIAGILVVVIYFTC. The Cytoplasmic portion of the chain corresponds to 521 to 1050; it reads PPKNWGDVSQ…SKSLTITTAL (530 aa). At serine 901 the chain carries Phosphoserine. Residues 915–943 are disordered; that stretch reads ETESSFGNRSLSPKQENRRTYSDSTIESS. Residues 916–928 are compositionally biased toward polar residues; sequence TESSFGNRSLSPK. The residue at position 936 (serine 936) is a Phosphoserine. Threonine 939 is subject to Phosphothreonine.

The protein belongs to the SLC12A transporter family.

It is found in the membrane. This is an uncharacterized protein from Schizosaccharomyces pombe (strain 972 / ATCC 24843) (Fission yeast).